Consider the following 412-residue polypeptide: 43 kDa receptor-associated protein of the synapse (412 aa).

Glycine 2 is lipidated: N-myristoyl glycine. 7 TPR repeats span residues threonine 6 to proline 39, threonine 83 to threonine 116, glycine 123 to asparagine 156, cysteine 163 to tyrosine 196, alanine 206 to histidine 239, alanine 246 to isoleucine 279, and isoleucine 286 to leucine 319. At tyrosine 196 the chain carries Phosphotyrosine. Residues cysteine 363–arginine 403 form an RING-type zinc finger.

It belongs to the RAPsyn family. In terms of tissue distribution, expressed in muscle fibers and in neurons.

The protein resides in the cell membrane. It localises to the postsynaptic cell membrane. The protein localises to the cytoplasm. It is found in the cytoskeleton. Postsynaptic protein required for clustering of nicotinic acetylcholine receptors (nAChRs) at the neuromuscular junction. It may link the receptor to the underlying postsynaptic cytoskeleton, possibly by direct association with actin or spectrin. In Gallus gallus (Chicken), this protein is 43 kDa receptor-associated protein of the synapse (RAPSN).